Here is a 306-residue protein sequence, read N- to C-terminus: Putative F-box protein At1g47300 (306 aa).

In terms of domain architecture, F-box spans 1–45 (MISDSIPKELILEIMLRLPAKSIARFHCVSKQWASMLSRPYFTEL). The interval 235–278 (DPKLLESKEEEEEEEEEEEEEEEEEEEEEEEEEEEESKEREKEK) is disordered. Residues 242 to 270 (KEEEEEEEEEEEEEEEEEEEEEEEEEEEE) are compositionally biased toward acidic residues.

This chain is Putative F-box protein At1g47300, found in Arabidopsis thaliana (Mouse-ear cress).